A 216-amino-acid chain; its full sequence is V-type ATP synthase subunit D (216 aa).

Belongs to the V-ATPase D subunit family.

Its function is as follows. Produces ATP from ADP in the presence of a proton gradient across the membrane. The polypeptide is V-type ATP synthase subunit D (Clostridium botulinum (strain Loch Maree / Type A3)).